We begin with the raw amino-acid sequence, 251 residues long: Triosephosphate isomerase (251 aa).

Residue 9–11 (NWK) participates in substrate binding. The active-site Electrophile is His-95. Glu-167 serves as the catalytic Proton acceptor. Residues Gly-173, Ser-213, and 234–235 (GG) each bind substrate.

This sequence belongs to the triosephosphate isomerase family. In terms of assembly, homodimer.

The protein resides in the cytoplasm. The enzyme catalyses D-glyceraldehyde 3-phosphate = dihydroxyacetone phosphate. It participates in carbohydrate biosynthesis; gluconeogenesis. The protein operates within carbohydrate degradation; glycolysis; D-glyceraldehyde 3-phosphate from glycerone phosphate: step 1/1. Involved in the gluconeogenesis. Catalyzes stereospecifically the conversion of dihydroxyacetone phosphate (DHAP) to D-glyceraldehyde-3-phosphate (G3P). The sequence is that of Triosephosphate isomerase from Ligilactobacillus salivarius (strain UCC118) (Lactobacillus salivarius).